Consider the following 372-residue polypeptide: Proline-rich P65 protein homolog (372 aa).

Residues 1 to 37 (MEKNRSAFQQNQQASNQPFNQDQNQYYQDPNQQQFNQ) show a composition bias toward low complexity. Positions 1-100 (MEKNRSAFQQ…GFDPNQQYYQ (100 aa)) are disordered. 13 repeat units span residues 29-40 (DPNQQQFNQSGF), 41-52 (DPNQQQFNQPGF), 53-60 (DPNQQYYQ), 61-72 (DPNQQQFNQAGF), 73-80 (DQNQQYYQ), 81-92 (DPNQQQFNQPGF), 93-100 (DPNQQYYQ), 101-112 (DPNQQQFNQAGF), 113-119 (DQNQYYQ), 120-131 (DPNQQQFNQSGF), 132-138 (DQNQYYQ), 139-150 (DPNQQQFNQPSF), and 151-162 (DLNNQQFNQPGF). Polar residues predominate over residues 38 to 49 (SGFDPNQQQFNQ). The segment covering 53–100 (DPNQQYYQDPNQQQFNQAGFDQNQQYYQDPNQQQFNQPGFDPNQQYYQ) has biased composition (low complexity). A disordered region spans residues 122 to 150 (NQQQFNQSGFDQNQYYQDPNQQQFNQPSF).

This is Proline-rich P65 protein homolog from Mycoplasma genitalium (strain ATCC 33530 / DSM 19775 / NCTC 10195 / G37) (Mycoplasmoides genitalium).